The chain runs to 223 residues: UPF0441 protein YgiB (223 aa).

Over residues T178 to T195 the composition is skewed to low complexity. Positions T178–G223 are disordered. Polar residues predominate over residues A204–G223.

Belongs to the UPF0441 family.

The chain is UPF0441 protein YgiB from Salmonella paratyphi A (strain ATCC 9150 / SARB42).